The primary structure comprises 200 residues: Serine/threonine-protein kinase mos (200 aa).

The Protein kinase domain maps to 2-200 (LCLLQPLGSG…ELLKGERVTA (199 aa)). Residues 8–16 (LGSGGFGSV) and Lys29 contribute to the ATP site. Catalysis depends on Asp143, which acts as the Proton acceptor.

Belongs to the protein kinase superfamily. Ser/Thr protein kinase family.

It catalyses the reaction L-seryl-[protein] + ATP = O-phospho-L-seryl-[protein] + ADP + H(+). The enzyme catalyses L-threonyl-[protein] + ATP = O-phospho-L-threonyl-[protein] + ADP + H(+). In Ciconia nigra (Black stork), this protein is Serine/threonine-protein kinase mos (MOS).